A 413-amino-acid chain; its full sequence is uncharacterized protein (413 aa).

Belongs to the mycobacterial PPE family.

This is an uncharacterized protein from Mycobacterium tuberculosis (strain CDC 1551 / Oshkosh).